Here is a 497-residue protein sequence, read N- to C-terminus: Angiopoietin-1 (497 aa).

Residues 1–19 (MTVFLSFAFFAAILTHIGC) form the signal peptide. Positions 81-119 (QKLQHLEHVMENYTQWLQKLENYIVENMKSEMAQIQQNA) form a coiled coil. Asn-92, Asn-122, Asn-154, Asn-243, and Asn-294 each carry an N-linked (GlcNAc...) asparagine glycan. Residues 153 to 261 (LNQTSRLEIQ…LELMDTVHNL (109 aa)) adopt a coiled-coil conformation. The Fibrinogen C-terminal domain maps to 276-496 (REEEKPFRDC…STTMMIRPLD (221 aa)). 2 disulfides stabilise this stretch: Cys-285–Cys-314 and Cys-438–Cys-451.

In terms of assembly, homooligomer. Interacts with TEK/TIE2. Interacts with SVEP1/polydom. Interacts with THBD; this interaction significantly inhibits the generation of activated PC and TAFIa/CPB2 by the thrombin/thrombomodulin complex.

The protein resides in the secreted. In terms of biological role, binds and activates TIE2 receptor by inducing its tyrosine phosphorylation. Implicated in endothelial developmental processes later and distinct from that of VEGF. Appears to play a crucial role in mediating reciprocal interactions between the endothelium and surrounding matrix and mesenchyme. Mediates blood vessel maturation/stability. It may play an important role in the heart early development. In Rattus norvegicus (Rat), this protein is Angiopoietin-1 (Angpt1).